We begin with the raw amino-acid sequence, 279 residues long: 3-methyl-2-oxobutanoate hydroxymethyltransferase (279 aa).

Mg(2+) is bound by residues Asp-44 and Asp-83. 3-methyl-2-oxobutanoate-binding positions include 44–45, Asp-83, and Lys-112; that span reads DS. Mg(2+) is bound at residue Glu-114. Glu-180 functions as the Proton acceptor in the catalytic mechanism.

This sequence belongs to the PanB family. Homodecamer; pentamer of dimers. Requires Mg(2+) as cofactor.

It localises to the cytoplasm. It carries out the reaction 3-methyl-2-oxobutanoate + (6R)-5,10-methylene-5,6,7,8-tetrahydrofolate + H2O = 2-dehydropantoate + (6S)-5,6,7,8-tetrahydrofolate. Its pathway is cofactor biosynthesis; (R)-pantothenate biosynthesis; (R)-pantoate from 3-methyl-2-oxobutanoate: step 1/2. Functionally, catalyzes the reversible reaction in which hydroxymethyl group from 5,10-methylenetetrahydrofolate is transferred onto alpha-ketoisovalerate to form ketopantoate. This chain is 3-methyl-2-oxobutanoate hydroxymethyltransferase, found in Chloroflexus aggregans (strain MD-66 / DSM 9485).